Consider the following 644-residue polypeptide: NADH-ubiquinone oxidoreductase chain 5 (644 aa).

18 helical membrane passes run 4 to 23 (FITL…RYIG), 30 to 49 (LNII…YINI), 78 to 100 (DLLS…IFAW), 112 to 129 (FYTY…LVLG), 133 to 155 (LILF…FWYN), 167 to 189 (LFIN…YIYK), 199 to 221 (LVSY…AASA), 234 to 256 (WAMA…IAGI), 271 to 293 (NILL…IAIN), 300 to 322 (IIAL…SSYN), 327 to 349 (HVLC…IHSL), 361 to 383 (GLLI…LMGL), 398 to 420 (SSIG…SSLL), 466 to 488 (SWMA…YLLQ), 517 to 539 (INIY…IIYL), 546 to 568 (LLYI…RFLF), 594 to 616 (GFLY…FNII), and 623 to 642 (FNHY…YLQF).

The protein belongs to the complex I subunit 5 family.

It localises to the mitochondrion inner membrane. The enzyme catalyses a ubiquinone + NADH + 5 H(+)(in) = a ubiquinol + NAD(+) + 4 H(+)(out). Core subunit of the mitochondrial membrane respiratory chain NADH dehydrogenase (Complex I) that is believed to belong to the minimal assembly required for catalysis. Complex I functions in the transfer of electrons from NADH to the respiratory chain. The immediate electron acceptor for the enzyme is believed to be ubiquinone. This is NADH-ubiquinone oxidoreductase chain 5 (ND5) from Wickerhamomyces canadensis (Yeast).